A 439-amino-acid chain; its full sequence is uncharacterized protein (439 aa).

Positions M1–S55 constitute a TRAM domain. Positions 68, 74, 77, and 149 each coordinate [4Fe-4S] cluster. S-adenosyl-L-methionine is bound by residues Q272, Y301, E322, and D367. C394 functions as the Nucleophile in the catalytic mechanism.

The protein belongs to the class I-like SAM-binding methyltransferase superfamily. RNA M5U methyltransferase family.

This is an uncharacterized protein from Thermotoga maritima (strain ATCC 43589 / DSM 3109 / JCM 10099 / NBRC 100826 / MSB8).